A 230-amino-acid polypeptide reads, in one-letter code: Transmembrane 4 L6 family member 20 (230 aa).

Residues 1 to 11 (MTCCEGWTSCN) lie on the Lumenal side of the membrane. The helical transmembrane segment at 12–32 (GFSLLVLLLLGVTLNAIPLIL) threads the bilayer. Residues 33–44 (NFVDEDQFFENP) lie on the Cytoplasmic side of the membrane. A helical transmembrane segment spans residues 45-65 (ISCFEWWFPGIIGAGVMAIPA). Residues 66 to 83 (TTMSLAARKRACCNNKTG) lie on the Lumenal side of the membrane. A helical membrane pass occupies residues 84–104 (MFLSSLLNAITVIGAAYCLLV). At 105–185 (SIQALAEGPL…HFNSIENQHR (81 aa)) the chain is on the cytoplasmic side. The helical transmembrane segment at 186–206 (IIHFSVFLGLLLVGILEILFG) threads the bilayer. The Lumenal segment spans residues 207–230 (LSQIIIGFFGCLCGGVSNGRSQIV).

Belongs to the L6 tetraspanin family. Glycosylated at Asn-132 in presence of ceramide which inverts the orientation of TM4SF20 in membranes exposing these residues to the endoplasmic reticulum lumen. In terms of processing, cleaved by signal peptidase at Ser-14 but the peptide does not act as a signal peptide. Cleavage is inhibited by ceramide which inverts the orientation of TM4SF20 in membranes exposing the N-terminus to the cytosol and not to the endoplasmic reticulum lumen.

The protein resides in the membrane. It is found in the endoplasmic reticulum membrane. Functionally, polytopic transmembrane protein. Inhibits regulated intramembrane proteolysis (RIP) of CREB3L1, inhibiting its activation and the induction of collagen synthesis. In response to ceramide, which alters TM4SF20 membrane topology, stimulates RIP activation of CREB3L1. Ceramide reverses the direction through which transmembrane helices are translocated into the endoplasmic reticulum membrane during translation of TM4SF20, this mechanism is called 'regulated alternative translocation' (RAT) and regulates the function of the transmembrane protein. The chain is Transmembrane 4 L6 family member 20 (TM4SF20) from Bos taurus (Bovine).